The primary structure comprises 154 residues: Superoxide dismutase [Cu-Zn] (154 aa).

H47, H49, and H64 together coordinate Cu cation. C58 and C147 form a disulfide bridge. Positions 64, 72, 81, and 84 each coordinate Zn(2+). Residue H121 participates in Cu cation binding. Basic and acidic residues predominate over residues 125 to 137 (DDLGRSEHPESKK). Residues 125-144 (DDLGRSEHPESKKTGNAGAR) are disordered. R144 serves as a coordination point for substrate.

Belongs to the Cu-Zn superoxide dismutase family. As to quaternary structure, homodimer. Cu cation serves as cofactor. Requires Zn(2+) as cofactor.

The protein localises to the cytoplasm. It carries out the reaction 2 superoxide + 2 H(+) = H2O2 + O2. Functionally, destroys radicals which are normally produced within the cells and which are toxic to biological systems. This is Superoxide dismutase [Cu-Zn] (sodC) from Aspergillus oryzae (strain ATCC 42149 / RIB 40) (Yellow koji mold).